A 361-amino-acid polypeptide reads, in one-letter code: Cell cycle control protein 50A (361 aa).

The interval 1–28 (MAMNYNAKDEVDGGPPCPPGGTAKTRRP) is disordered. A2 carries the N-acetylalanine modification. The required for ATPase and aminophospholipid flippase activity stretch occupies residues 2-48 (AMNYNAKDEVDGGPPCPPGGTAKTRRPDNTAFKQQRLPAWQPILTAG). The Cytoplasmic portion of the chain corresponds to 2–49 (AMNYNAKDEVDGGPPCPPGGTAKTRRPDNTAFKQQRLPAWQPILTAGT). Residues 49–348 (TVLPTFFIIG…LGVVLLVINH (300 aa)) form an interaction with ATP8A2 region. A helical transmembrane segment spans residues 50-70 (VLPTFFIIGLIFIPIGIGIFV). Residues 71-325 (TSNNIREIEI…SWMGGKNPFL (255 aa)) lie on the Exoplasmic loop side of the membrane. Cystine bridges form between C91-C104, C94-C102, and C157-C171. 3 N-linked (GlcNAc...) asparagine glycosylation sites follow: N180, N190, and N294. A helical membrane pass occupies residues 326-346 (GIAYITIGSISFLLGVVLLVI). Topologically, residues 347–361 (NHKYRNSSNTADITI) are cytoplasmic.

The protein belongs to the CDC50/LEM3 family. Component of various P4-ATPase flippase complexes which consists of a catalytic alpha subunit and an accessory beta subunit. Interacts with ATP8A1 to form a flippase complex; this complex forms an intermediate phosphoenzyme. Interacts with ATP8A2 to form a flippase complex. ATP8B1:TMEM30A and ATP8B2:TMEM30A flippase complexes have been shown to form intermediate phosphoenzymes in vitro. Interacts with alpha subunits ATP8A1, ATP8B1, ATP8B2, ATP8B4, ATP10A, ATP10B, ATP10D, ATP11A, ATP11B and ATP11C. Post-translationally, N-glycosylated; contributes to ATP8A2:TMEM30A flippase complex assembly but not to functional activity. In terms of tissue distribution, expressed in photoreceptor cells; detected in retina outer segment and other retinal layers (at protein level).

The protein resides in the membrane. It is found in the golgi apparatus. It localises to the cytoplasmic vesicle. Its subcellular location is the secretory vesicle membrane. The protein localises to the apical cell membrane. The protein resides in the photoreceptor inner segment. It is found in the cell projection. It localises to the cilium. Its subcellular location is the photoreceptor outer segment. Its function is as follows. Accessory component of a P4-ATPase flippase complex which catalyzes the hydrolysis of ATP coupled to the transport of aminophospholipids from the outer to the inner leaflet of various membranes and ensures the maintenance of asymmetric distribution of phospholipids. Phospholipid translocation also seems to be implicated in vesicle formation and in uptake of lipid signaling molecules. The beta subunit may assist in binding of the phospholipid substrate. Required for the proper folding, assembly and ER to Golgi exit of the ATP8A2:TMEM30A flippase complex. ATP8A2:TMEM30A may be involved in regulation of neurite outgrowth, and, reconstituted to liposomes, predomiminantly transports phosphatidylserine (PS) and to a lesser extent phosphatidylethanolamine (PE). The ATP8A1:TMEM30A flippase complex seems to play a role in regulation of cell migration probably involving flippase-mediated translocation of phosphatidylethanolamine (PE) at the plasma membrane. Required for the formation of the ATP8A2, ATP8B1 and ATP8B2 P-type ATPAse intermediate phosphoenzymes. Involved in uptake of platelet-activating factor (PAF). Can also mediate the export of alpha subunits ATP8A1, ATP8B1, ATP8B2, ATP8B4, ATP10A, ATP10B, ATP10D, ATP11A, ATP11B and ATP11C from the ER to other membrane localizations. This Bos taurus (Bovine) protein is Cell cycle control protein 50A.